Consider the following 402-residue polypeptide: Cysteine-rich venom protein (402 aa).

Positions 1-13 (MNLALFIIFATIF) are cleaved as a signal peptide. Residues 57 to 199 (LETHNQLRNK…VKKVLYTCNY (143 aa)) form the SCP domain.

Belongs to the CRISP family. Post-translationally, contains 7 disulfide bonds. In terms of tissue distribution, expressed by the venom gland.

It localises to the secreted. In Tityus serrulatus (Brazilian scorpion), this protein is Cysteine-rich venom protein.